We begin with the raw amino-acid sequence, 805 residues long: Probable phosphoketolase (805 aa).

The protein belongs to the XFP family. Requires thiamine diphosphate as cofactor.

This is Probable phosphoketolase from Synechocystis sp. (strain ATCC 27184 / PCC 6803 / Kazusa).